Reading from the N-terminus, the 505-residue chain is Light-independent protochlorophyllide reductase subunit B (505 aa).

D36 lines the [4Fe-4S] cluster pocket. Residue D291 is the Proton donor of the active site. Position 426-427 (426-427 (GM)) interacts with substrate.

The protein belongs to the ChlB/BchB/BchZ family. As to quaternary structure, protochlorophyllide reductase is composed of three subunits; ChlL, ChlN and ChlB. Forms a heterotetramer of two ChlB and two ChlN subunits. [4Fe-4S] cluster serves as cofactor.

The catalysed reaction is chlorophyllide a + oxidized 2[4Fe-4S]-[ferredoxin] + 2 ADP + 2 phosphate = protochlorophyllide a + reduced 2[4Fe-4S]-[ferredoxin] + 2 ATP + 2 H2O. It functions in the pathway porphyrin-containing compound metabolism; chlorophyll biosynthesis (light-independent). Component of the dark-operative protochlorophyllide reductase (DPOR) that uses Mg-ATP and reduced ferredoxin to reduce ring D of protochlorophyllide (Pchlide) to form chlorophyllide a (Chlide). This reaction is light-independent. The NB-protein (ChlN-ChlB) is the catalytic component of the complex. This Gloeobacter violaceus (strain ATCC 29082 / PCC 7421) protein is Light-independent protochlorophyllide reductase subunit B.